The primary structure comprises 476 residues: S-adenosylmethionine-dependent nucleotide dehydratase (476 aa).

The tract at residues 1-168 (MKTKITLSGF…LTANEVADLI (168 aa)) is cytidylate kinase-like domain. ATP is bound at residue 9-17 (GFAGTGKST). In terms of domain architecture, Radical SAM core spans 176–400 (NAVSKIPSVN…HKDVETIVPE (225 aa)). The prokaryotic viperin domain stretch occupies residues 183-476 (SVNFHLWQPC…DLRKEEVSYE (294 aa)). Residues Cys-192, Cys-196, and Cys-199 each coordinate [4Fe-4S] cluster.

The protein in the N-terminal section; belongs to the cytidylate kinase-like family. It in the C-terminal section; belongs to the radical SAM superfamily. Viperin family. [4Fe-4S] cluster serves as cofactor.

The enzyme catalyses GTP + AH2 + S-adenosyl-L-methionine = 3'-deoxy-3',4'-didehydro-GTP + 5'-deoxyadenosine + L-methionine + A + H2O + H(+). In terms of biological role, expression of pVip60 in E.coli (strain MG1655) confers resistance to phage T7; prevents culture collapse upon infection. Catalyzes the conversion of guanosine triphosphate (GTP) to 3'-deoxy-3',4'-didehydro-GTP (ddhGTP), probably via a SAM-dependent radical mechanism. The modified nucleotide represses transcription from T7 RNA polymerase-directed genes (possibly by acting as chain terminators), strongly suggesting these nucleotides block viral polymerase transcription. The N-terminus of the protein may generate NTP for use by the viperin domain. The sequence is that of S-adenosylmethionine-dependent nucleotide dehydratase from Lacinutrix mariniflava (strain JCM 13824 / KCCM 42306 / AKS432).